A 216-amino-acid chain; its full sequence is Uracil phosphoribosyltransferase (216 aa).

5-phospho-alpha-D-ribose 1-diphosphate-binding positions include Arg85, Arg110, and 136–144; that span reads DPMLATGNS. Uracil is bound by residues Ile201 and 206 to 208; that span reads GDA. 5-phospho-alpha-D-ribose 1-diphosphate is bound at residue Asp207.

The protein belongs to the UPRTase family. Mg(2+) serves as cofactor.

It catalyses the reaction UMP + diphosphate = 5-phospho-alpha-D-ribose 1-diphosphate + uracil. It functions in the pathway pyrimidine metabolism; UMP biosynthesis via salvage pathway; UMP from uracil: step 1/1. With respect to regulation, allosterically activated by GTP. Functionally, catalyzes the conversion of uracil and 5-phospho-alpha-D-ribose 1-diphosphate (PRPP) to UMP and diphosphate. This chain is Uracil phosphoribosyltransferase, found in Rhodospirillum centenum (strain ATCC 51521 / SW).